Reading from the N-terminus, the 235-residue chain is U1 small nuclear ribonucleoprotein C (235 aa).

A Matrin-type zinc finger spans residues 4–36 (YYCEYCDIYLTHSSPVGRRQHIHGRKHISAKIE). Positions 131–235 (QAHNNYSYPN…SKEHIESDIS (105 aa)) are disordered. Over residues 134 to 168 (NNYSYPNSINPSNQINYSNNYGSNNFNNSNEFNKN) the composition is skewed to low complexity. Positions 169 to 189 (MNEKDNINNNDIHDNKVKTDE) are enriched in basic and acidic residues. The segment covering 192–203 (PINNDNLNNTRN) has biased composition (low complexity). Composition is skewed to basic and acidic residues over residues 205 to 217 (SYEE…DHKK) and 225 to 235 (NSKEHIESDIS).

This sequence belongs to the U1 small nuclear ribonucleoprotein C family. U1 snRNP is composed of the 7 core Sm proteins B/B', D1, D2, D3, E, F and G that assemble in a heptameric protein ring on the Sm site of the small nuclear RNA to form the core snRNP, and at least 3 U1 snRNP-specific proteins U1-70K, U1-A and U1-C. U1-C interacts with U1 snRNA and the 5' splice-site region of the pre-mRNA.

The protein resides in the nucleus. Component of the spliceosomal U1 snRNP, which is essential for recognition of the pre-mRNA 5' splice-site and the subsequent assembly of the spliceosome. U1-C is directly involved in initial 5' splice-site recognition for both constitutive and regulated alternative splicing. The interaction with the 5' splice-site seems to precede base-pairing between the pre-mRNA and the U1 snRNA. Stimulates commitment or early (E) complex formation by stabilizing the base pairing of the 5' end of the U1 snRNA and the 5' splice-site region. In Plasmodium falciparum (isolate 3D7), this protein is U1 small nuclear ribonucleoprotein C.